The primary structure comprises 91 residues: Small ribosomal subunit protein uS15c (91 aa).

This sequence belongs to the universal ribosomal protein uS15 family. Part of the 30S ribosomal subunit.

Its subcellular location is the plastid. It localises to the chloroplast. This is Small ribosomal subunit protein uS15c (rps15) from Cicer arietinum (Chickpea).